Here is a 161-residue protein sequence, read N- to C-terminus: Troponin C, slow skeletal and cardiac muscles (161 aa).

Met-1 is modified (N-acetylmethionine). EF-hand domains lie at 16–51, 52–87, 92–127, and 128–161; these read QKNE…LGQN, PTPE…CMKD, KSEE…TGET, and ITED…KGVE. Ca(2+)-binding residues include Asp-65, Asp-67, Ser-69, Thr-71, and Glu-76. Ser-98 carries the post-translational modification Phosphoserine. Residues Asp-105, Asn-107, Asp-109, Tyr-111, Glu-116, Asp-141, Asn-143, Asp-145, Arg-147, and Glu-152 each contribute to the Ca(2+) site.

The protein belongs to the troponin C family.

Functionally, troponin is the central regulatory protein of striated muscle contraction. Tn consists of three components: Tn-I which is the inhibitor of actomyosin ATPase, Tn-T which contains the binding site for tropomyosin and Tn-C. The binding of calcium to Tn-C abolishes the inhibitory action of Tn on actin filaments. This is Troponin C, slow skeletal and cardiac muscles (TNNC1) from Homo sapiens (Human).